Consider the following 290-residue polypeptide: Xylanase inhibitor protein 2 (290 aa).

The first 27 residues, 1–27 (MGLVHALLPFAAAAALLLLAAPPPATA), serve as a signal peptide directing secretion. A GH18 domain is found at 30 to 290 (PGLAVYWGRH…DKKANYTGEG (261 aa)). An intrachain disulfide couples Cys-49 to Cys-89. An N-linked (GlcNAc...) asparagine glycan is attached at Asn-112. Cys-187 and Cys-216 form a disulfide bridge. Asn-285 is a glycosylation site (N-linked (GlcNAc...) asparagine).

It belongs to the glycosyl hydrolase 18 family. Xylanase inhibitor subfamily. In terms of assembly, binds to fungal GH10 xylanases.

It is found in the secreted. Functionally, fungal xylanase inhibitor. Possesses competitive inhibiting activity against several fungal endo-1,4-beta-D-xylanases belonging to glycoside hydrolase family 10 (GH10) and family 11 (GH11). May function in plant defense against secreted fungal pathogen xylanases. Is similar to class III chitinases, but does not exhibit chitinase activity. In Oryza sativa subsp. japonica (Rice), this protein is Xylanase inhibitor protein 2.